The sequence spans 498 residues: Ulvan-active sulfatase (498 aa).

The N-terminal stretch at 1–22 (MNSKKTGVIILGCIAFLHIACS) is a signal peptide. Ca(2+) is bound by residues aspartate 55, aspartate 56, cysteine 95, aspartate 266, and histidine 267. Cysteine 95 (nucleophile) is an active-site residue. Cysteine 95 carries the 3-oxoalanine (Cys) modification.

It belongs to the sulfatase family. It depends on Ca(2+) as a cofactor. Post-translationally, the conversion to 3-oxoalanine (also known as C-formylglycine, FGly), of a serine or cysteine residue in prokaryotes and of a cysteine residue in eukaryotes, is critical for catalytic activity. This post-translational modification is severely defective in multiple sulfatase deficiency (MSD).

It is found in the periplasm. In terms of biological role, sulfatase involved in ulvan degradation. Ulvan is the main polysaccharide component of the Ulvales (green seaweed) cell wall. It is composed of disaccharide building blocks comprising 3-sulfated rhamnose (Rha3S) linked to D-glucuronic acid (GlcA), L-iduronic acid (IduA), or D-xylose (Xyl). This is Ulvan-active sulfatase from Formosa agariphila (strain DSM 15362 / KCTC 12365 / LMG 23005 / KMM 3901 / M-2Alg 35-1).